A 92-amino-acid polypeptide reads, in one-letter code: UPF0235 protein CCA_00247 (92 aa).

Belongs to the UPF0235 family.

In Chlamydia caviae (strain ATCC VR-813 / DSM 19441 / 03DC25 / GPIC) (Chlamydophila caviae), this protein is UPF0235 protein CCA_00247.